The following is an 812-amino-acid chain: MAFSQVQCLDDNHVNWRSSESKPEFFYSEEQRLALEALVARGRDAFYEVLKRENIRDFLSELELSRIVEAIEVYDPGSEDPRVSGRRPEPQDNGGADASEETSAAGGPPATETLPSLEYWPQKSDRSIPQLDLGWPDTIAYRGVTRASVYMQPPIDGQPHIKEVVRKMVSQAQKVIAVVMDMFTDVDIFKDLLDAGFKRKVAVYIIVDESNVKYFLHMCERARMHLGHLKNLRVRSSGGTEFFTRSATKFKGVLAQKFMFVDGDRAVCGSYSFTWSAARTDRNVISVLSGQVVEMFDRQFQELYLMSQSVSLKDIPMEKEPEPEPIVLPSVVPLVPTGTMAKKLVNPKYALVKAKSVDEIAKSSSDKQEVTRPPGLRGPAVAERPGDLSELLPPVHPGLLNLERANMFEYLPTWVEPDPEPGSDILGYINIIDPNIWNPQPNQMNRIKIRDTAHASAQHQLWKQSQGARPCPAPCPPPAPRDSQGVVPAENGFPQGNPEPQAPVPKPRTVPVASVLARDGSDIGWALDTPEKETPQNGIDPRLPSTASESEVPQQQHSSMTQDDPDGLERGLPNGLDEDEDDDDDYVTLSDQDSLSGSSGPGPGHRRPSVASSMSDEYFEVRERSVPLQRRHSEQMANGPGHPPRRQLSAPHVTRGTFGGPLSSPLWAQGRSREDVDASRIQGQRPMDRQAQGQHFHRHGSTTSRTPGPPRFRPAADGTQSSSKKASPAAAGPHHWQPKGSPTPRMLPDPGSPRPTRNTRLRAELRATEEHASPFGIPYSKLSQSKHLKARAGGSQWAPSDSKRRARDHKEP.

An N-acetylalanine modification is found at alanine 2. A DUF1669 region spans residues 2–312 (AFSQVQCLDD…LYLMSQSVSL (311 aa)). Serine 4 is subject to Phosphoserine. Positions 76–119 (PGSEDPRVSGRRPEPQDNGGADASEETSAAGGPPATETLPSLEY) are disordered. Residues 79-90 (EDPRVSGRRPEP) show a composition bias toward basic and acidic residues. Residues serine 124, serine 127, and serine 356 each carry the phosphoserine modification. 3 disordered regions span residues 362 to 389 (KSSSDKQEVTRPPGLRGPAVAERPGDLS), 455 to 509 (ASAQ…KPRT), and 521 to 812 (SDIG…HKEP). A compositionally biased stretch (polar residues) spans 455 to 467 (ASAQHQLWKQSQG). The segment covering 471 to 480 (CPAPCPPPAP) has biased composition (pro residues). Residues 545 to 562 (STASESEVPQQQHSSMTQ) show a composition bias toward polar residues. Residues 576-586 (LDEDEDDDDDY) are compositionally biased toward acidic residues. Residues 589–598 (LSDQDSLSGS) are compositionally biased toward low complexity. Residues serine 609, serine 613, serine 615, and serine 649 each carry the phosphoserine modification. Positions 721 to 731 (SSSKKASPAAA) are enriched in low complexity. Over residues 761–772 (LRAELRATEEHA) the composition is skewed to basic and acidic residues.

Belongs to the FAM83 family. Interacts with SMAD1 (via MH2 domain); in a SMAD4-independent manner. Directly interacts (via DUF1669) with casein kinase isoforms CSNK1A1 and CSNK1A1L. In terms of processing, BMP signaling induces the phosphorylation by BMPR1A at Ser-609, Ser-613 and Ser-615. Phosphorylation at Ser-609 is necessary for the activation of SMAD4-independent BMP target genes such as NEDD9 and ASNS. Phosphorylated by CSNK1A1.

The protein resides in the cytoplasm. The protein localises to the cytosol. It is found in the nucleus. Its function is as follows. Substrate for type I BMP receptor kinase involved in regulation of some target genes of the BMP signaling pathway. Also regulates the expression of several non-BMP target genes, suggesting a role in other signaling pathways. The sequence is that of Protein FAM83G (Fam83g) from Mus musculus (Mouse).